The following is an 894-amino-acid chain: LRR receptor-like serine/threonine-protein kinase IOS1 (894 aa).

An N-terminal signal peptide occupies residues 1–23; it reads MAFSSCFLLVLLQIFSALLLCLA. Topologically, residues 24–515 are extracellular; the sequence is QDQSGFISLD…KKKKNTVIAP (492 aa). N-linked (GlcNAc...) asparagine glycosylation is found at N48, N95, N137, N179, N223, N230, N260, N287, N309, N338, N399, N441, N462, and N469. LRR repeat units lie at residues 431 to 457 and 459 to 479; these read LTSLEVLDLSNNSLTGSVPEFLANMET and KLINLSGNELNGSIPATLLDK. Residues 516–536 form a helical membrane-spanning segment; that stretch reads VAASLVSVFLIGAGIVTFLIL. The Cytoplasmic segment spans residues 537-894; it reads KRKKRTKLGL…FTTELNPGAR (358 aa). T577 is modified (phosphothreonine). The Protein kinase domain occupies 586-858; the sequence is NNFERVLGRG…QVVMDLKECL (273 aa). ATP contacts are provided by residues 592–600 and K613; that span reads LGRGGFGVV. Y658 carries the post-translational modification Phosphotyrosine. The active-site Proton acceptor is the D710. S744 is modified (phosphoserine). 2 positions are modified to phosphothreonine: T745 and T750. Y758 carries the post-translational modification Phosphotyrosine.

It belongs to the protein kinase superfamily. Ser/Thr protein kinase family. In terms of assembly, homodimerization. Interacts with BAK1 and FLS2; triggers FLS2-BAK1 complex formation upon microbe-associated molecular patterns (MAMPs) treatment. Also binds to CERK1 and EFR. As to expression, expressed in roots, cotyledons, leaves, flowers and siliques.

The protein localises to the cell membrane. Negatively regulates the abscisic acid (ABA) signaling pathway. Required for full susceptibility to filamentous (hemi)biotrophic oomycetes (e.g. H.arabidopsidis and P.parasitica) and fungal (e.g. E.cruciferarum) pathogens, probably by triggering the repression of ABA-sensitive COLD REGULATED and RESISTANCE TO DESICCATION genes during infection, but independently of immune responses. Involved in BAK1-dependent and BAK1-independent microbe-associated molecular patterns (MAMPs)-triggered immunity (PTI) leading to defense responses, including callose deposition and MAPK cascade activation, toward pathogenic bacteria (e.g. P.syringae). Required for chitin-mediated PTI. The polypeptide is LRR receptor-like serine/threonine-protein kinase IOS1 (Arabidopsis thaliana (Mouse-ear cress)).